An 821-amino-acid chain; its full sequence is Lon protease (821 aa).

In terms of domain architecture, Lon N-terminal spans 18–216 (LPLMSLREVV…KVYELLQGEI (199 aa)). Residue 368–375 (GPPGVGKT) participates in ATP binding. Residues 606-787 (TSQVGVCTGL…DEVLPQALMA (182 aa)) enclose the Lon proteolytic domain. Catalysis depends on residues Ser693 and Lys736.

Belongs to the peptidase S16 family. Homohexamer. Organized in a ring with a central cavity.

It is found in the cytoplasm. It carries out the reaction Hydrolysis of proteins in presence of ATP.. In terms of biological role, ATP-dependent serine protease that mediates the selective degradation of mutant and abnormal proteins as well as certain short-lived regulatory proteins. Required for cellular homeostasis and for survival from DNA damage and developmental changes induced by stress. Degrades polypeptides processively to yield small peptide fragments that are 5 to 10 amino acids long. Binds to DNA in a double-stranded, site-specific manner. In Nitratidesulfovibrio vulgaris (strain ATCC 29579 / DSM 644 / CCUG 34227 / NCIMB 8303 / VKM B-1760 / Hildenborough) (Desulfovibrio vulgaris), this protein is Lon protease.